We begin with the raw amino-acid sequence, 909 residues long: DNA mismatch repair protein MutS (909 aa).

614–621 (GPNMAGKS) contacts ATP. The interval 798-827 (LEENSPQNNDISKESSSSSNSHDKLESSVI) is disordered. Residues 818–827 (SHDKLESSVI) show a composition bias toward basic and acidic residues.

It belongs to the DNA mismatch repair MutS family.

Its function is as follows. This protein is involved in the repair of mismatches in DNA. It is possible that it carries out the mismatch recognition step. This protein has a weak ATPase activity. The sequence is that of DNA mismatch repair protein MutS from Clostridium novyi (strain NT).